The primary structure comprises 368 residues: Homoserine O-acetyltransferase (368 aa).

Positions 43-346 (ILLEHALTGT…EYGHDAFLVE (304 aa)) constitute an AB hydrolase-1 domain. Serine 145 acts as the Nucleophile in catalysis. Arginine 212 contributes to the substrate binding site. Active-site residues include aspartate 307 and histidine 340. A substrate-binding site is contributed by aspartate 341.

Belongs to the AB hydrolase superfamily. MetX family. In terms of assembly, homodimer.

Its subcellular location is the cytoplasm. It carries out the reaction L-homoserine + acetyl-CoA = O-acetyl-L-homoserine + CoA. It participates in amino-acid biosynthesis; L-methionine biosynthesis via de novo pathway; O-acetyl-L-homoserine from L-homoserine: step 1/1. Its function is as follows. Transfers an acetyl group from acetyl-CoA to L-homoserine, forming acetyl-L-homoserine. The sequence is that of Homoserine O-acetyltransferase from Listeria monocytogenes serovar 1/2a (strain ATCC BAA-679 / EGD-e).